The sequence spans 114 residues: Large ribosomal subunit protein bL20 (114 aa).

Belongs to the bacterial ribosomal protein bL20 family.

In terms of biological role, binds directly to 23S ribosomal RNA and is necessary for the in vitro assembly process of the 50S ribosomal subunit. It is not involved in the protein synthesizing functions of that subunit. This is Large ribosomal subunit protein bL20 from Amoebophilus asiaticus (strain 5a2).